The sequence spans 196 residues: Carnitine operon protein CaiE (196 aa).

The segment at 177-196 is disordered; sequence RQMEENRPRLQGTTDVMPKR.

The protein belongs to the transferase hexapeptide repeat family.

The protein operates within amine and polyamine metabolism; carnitine metabolism. In terms of biological role, overproduction of CaiE stimulates the activity of CaiB and CaiD. The chain is Carnitine operon protein CaiE from Escherichia coli O17:K52:H18 (strain UMN026 / ExPEC).